A 350-amino-acid chain; its full sequence is tRNA uridine(34) hydroxylase (350 aa).

The Rhodanese domain maps to 146–240 (DDPDAVFIDM…YARRAREQGL (95 aa)). Cysteine 200 functions as the Cysteine persulfide intermediate in the catalytic mechanism. A compositionally biased stretch (basic and acidic residues) spans 319 to 328 (RRRRAGRENG). The tract at residues 319–350 (RRRRAGRENGNKIFNKSRGRLNSKLSIPDPAE) is disordered.

This sequence belongs to the TrhO family.

The enzyme catalyses uridine(34) in tRNA + AH2 + O2 = 5-hydroxyuridine(34) in tRNA + A + H2O. Functionally, catalyzes oxygen-dependent 5-hydroxyuridine (ho5U) modification at position 34 in tRNAs. In Salmonella typhi, this protein is tRNA uridine(34) hydroxylase.